Here is a 445-residue protein sequence, read N- to C-terminus: Sensor protein kinase CarS (445 aa).

An N-terminal signal peptide occupies residues 1 to 24; the sequence is MRSIQRRLSVGLFAVLLVVGLVLA. Residues 150–170 form a helical membrane-spanning segment; that stretch reads FARVQWMGLGAGALALLLVLL. Residues 177-228 form the HAMP domain; the sequence is RRSLRPLEEVRLQIAQLQQGQRSQLDNQAPEELEPLVEQINHLLAHTEETLK. A Histidine kinase domain is found at 236–438; it reads NLGHALKTPL…RVSVELPLQK (203 aa). Position 239 is a phosphohistidine; by autocatalysis (His-239).

The protein resides in the membrane. The catalysed reaction is ATP + protein L-histidine = ADP + protein N-phospho-L-histidine.. Functionally, member of the two-component regulatory system CarS/CarR that regulates the expression of multiple genes involved in calcium signaling and homeostasis including CarO and CarP. May function as a membrane-associated protein kinase that phosphorylates CarR in response to environmental signals leading to activation of specific gene promoters. This is Sensor protein kinase CarS (carS) from Pseudomonas aeruginosa (strain ATCC 15692 / DSM 22644 / CIP 104116 / JCM 14847 / LMG 12228 / 1C / PRS 101 / PAO1).